The following is a 205-amino-acid chain: DNA-directed RNA polymerase subunit 5 (205 aa).

This sequence belongs to the archaeal Rpo5/eukaryotic RPB5 RNA polymerase subunit family.

Its subcellular location is the virion. The catalysed reaction is RNA(n) + a ribonucleoside 5'-triphosphate = RNA(n+1) + diphosphate. In terms of biological role, DNA-dependent RNA polymerase catalyzes the transcription of DNA into RNA using the four ribonucleoside triphosphates as substrates. The polypeptide is DNA-directed RNA polymerase subunit 5 (Acanthamoeba polyphaga (Amoeba)).